Consider the following 387-residue polypeptide: tRNA-specific 2-thiouridylase MnmA (387 aa).

Residues 34–41 and methionine 60 contribute to the ATP site; that span reads AMSGGVDS. Cysteine 127 functions as the Nucleophile in the catalytic mechanism. An intrachain disulfide couples cysteine 127 to cysteine 223. ATP is bound at residue glycine 151. Positions 173–175 are interaction with tRNA; that stretch reads KDQ. Cysteine 223 (cysteine persulfide intermediate) is an active-site residue.

This sequence belongs to the MnmA/TRMU family.

Its subcellular location is the cytoplasm. The catalysed reaction is S-sulfanyl-L-cysteinyl-[protein] + uridine(34) in tRNA + AH2 + ATP = 2-thiouridine(34) in tRNA + L-cysteinyl-[protein] + A + AMP + diphosphate + H(+). Its function is as follows. Catalyzes the 2-thiolation of uridine at the wobble position (U34) of tRNA, leading to the formation of s(2)U34. This chain is tRNA-specific 2-thiouridylase MnmA, found in Anaplasma marginale (strain St. Maries).